Consider the following 65-residue polypeptide: Large ribosomal subunit protein uL29 (65 aa).

The protein belongs to the universal ribosomal protein uL29 family.

This is Large ribosomal subunit protein uL29 from Desulforamulus reducens (strain ATCC BAA-1160 / DSM 100696 / MI-1) (Desulfotomaculum reducens).